A 260-amino-acid polypeptide reads, in one-letter code: PsbP domain-containing protein 4, chloroplastic (260 aa).

This sequence belongs to the PsbP family.

The protein localises to the plastid. The protein resides in the chloroplast thylakoid lumen. This is PsbP domain-containing protein 4, chloroplastic (PPD4) from Arabidopsis thaliana (Mouse-ear cress).